The following is a 246-amino-acid chain: Putative 4'-phosphopantetheinyl transferase slr0495 (246 aa).

Residues D110 and E156 each contribute to the Mg(2+) site.

Belongs to the P-Pant transferase superfamily. Gsp/Sfp/HetI/AcpT family. It depends on Mg(2+) as a cofactor.

Probably transfers the 4'-phosphopantetheine moiety from coenzyme A (CoA) to a serine residue of a carrier protein domain. The sequence is that of Putative 4'-phosphopantetheinyl transferase slr0495 from Synechocystis sp. (strain ATCC 27184 / PCC 6803 / Kazusa).